A 990-amino-acid polypeptide reads, in one-letter code: F-box/LRR-repeat protein 15 (990 aa).

The 47-residue stretch at Phe-190–Leu-236 folds into the F-box domain. 22 LRR repeats span residues Asn-237 to Ala-258, Leu-280 to Glu-303, Leu-317 to Val-341, Cys-348 to Leu-373, Leu-397 to Leu-423, Leu-441 to Asn-465, Ser-466 to Cys-477, Asn-478 to Asp-503, Cys-519 to Asn-542, Cys-550 to Asp-574, Cys-589 to Ala-612, Thr-614 to His-633, Gln-640 to Cys-652, Pro-653 to Glu-678, Leu-734 to Ser-756, Ile-758 to Glu-782, Leu-785 to Cys-809, Leu-813 to Tyr-839, Phe-882 to Ser-893, Val-894 to Cys-914, Cys-915 to Met-937, and Cys-949 to Thr-973.

This chain is F-box/LRR-repeat protein 15 (FBL15), found in Arabidopsis thaliana (Mouse-ear cress).